The primary structure comprises 381 residues: tRNA-cytidine(32) 2-sulfurtransferase (381 aa).

Residues 101–106 (SGGKDS) carry the PP-loop motif motif. [4Fe-4S] cluster contacts are provided by cysteine 176, cysteine 179, and cysteine 267.

Belongs to the TtcA family. As to quaternary structure, homodimer. Requires Mg(2+) as cofactor. The cofactor is [4Fe-4S] cluster.

It is found in the cytoplasm. The enzyme catalyses cytidine(32) in tRNA + S-sulfanyl-L-cysteinyl-[cysteine desulfurase] + AH2 + ATP = 2-thiocytidine(32) in tRNA + L-cysteinyl-[cysteine desulfurase] + A + AMP + diphosphate + H(+). Its pathway is tRNA modification. Functionally, catalyzes the ATP-dependent 2-thiolation of cytidine in position 32 of tRNA, to form 2-thiocytidine (s(2)C32). The sulfur atoms are provided by the cysteine/cysteine desulfurase (IscS) system. The protein is tRNA-cytidine(32) 2-sulfurtransferase of Psychrobacter cryohalolentis (strain ATCC BAA-1226 / DSM 17306 / VKM B-2378 / K5).